Consider the following 476-residue polypeptide: Glycogen synthase (476 aa).

Lysine 15 serves as a coordination point for ADP-alpha-D-glucose.

The protein belongs to the glycosyltransferase 1 family. Bacterial/plant glycogen synthase subfamily.

It carries out the reaction [(1-&gt;4)-alpha-D-glucosyl](n) + ADP-alpha-D-glucose = [(1-&gt;4)-alpha-D-glucosyl](n+1) + ADP + H(+). It functions in the pathway glycan biosynthesis; glycogen biosynthesis. Functionally, synthesizes alpha-1,4-glucan chains using ADP-glucose. The chain is Glycogen synthase (glgA) from Haemophilus influenzae (strain ATCC 51907 / DSM 11121 / KW20 / Rd).